The following is a 273-amino-acid chain: Formamidopyrimidine-DNA glycosylase (273 aa).

The Schiff-base intermediate with DNA role is filled by Pro-2. Residue Glu-3 is the Proton donor of the active site. Catalysis depends on Lys-58, which acts as the Proton donor; for beta-elimination activity. Residues His-92, Arg-111, and Lys-153 each coordinate DNA. The FPG-type zinc-finger motif lies at 238–272 (KVYGREGQSCLSCSSTIIKIKHSGRSTFYCKTCQY). The Proton donor; for delta-elimination activity role is filled by Arg-262.

Belongs to the FPG family. In terms of assembly, monomer. The cofactor is Zn(2+).

The enzyme catalyses Hydrolysis of DNA containing ring-opened 7-methylguanine residues, releasing 2,6-diamino-4-hydroxy-5-(N-methyl)formamidopyrimidine.. The catalysed reaction is 2'-deoxyribonucleotide-(2'-deoxyribose 5'-phosphate)-2'-deoxyribonucleotide-DNA = a 3'-end 2'-deoxyribonucleotide-(2,3-dehydro-2,3-deoxyribose 5'-phosphate)-DNA + a 5'-end 5'-phospho-2'-deoxyribonucleoside-DNA + H(+). In terms of biological role, involved in base excision repair of DNA damaged by oxidation or by mutagenic agents. Acts as a DNA glycosylase that recognizes and removes damaged bases. Has a preference for oxidized purines, such as 7,8-dihydro-8-oxoguanine (8-oxoG). Has AP (apurinic/apyrimidinic) lyase activity and introduces nicks in the DNA strand. Cleaves the DNA backbone by beta-delta elimination to generate a single-strand break at the site of the removed base with both 3'- and 5'-phosphates. This chain is Formamidopyrimidine-DNA glycosylase, found in Rickettsia conorii (strain ATCC VR-613 / Malish 7).